Here is a 281-residue protein sequence, read N- to C-terminus: Arabinooligosaccharides transport system permease protein AraQ (281 aa).

The next 6 helical transmembrane spans lie at 15-35, 81-101, 112-132, 142-162, 185-205, and 247-267; these read LTLF…CLLL, LVLG…IGYG, IIFV…MLPL, IDSY…VFFF, FGIF…AMII, and MLIS…LFFQ. In terms of domain architecture, ABC transmembrane type-1 spans 77–266; it reads FFNSLVLGLF…LPVIIIFLFF (190 aa).

This sequence belongs to the binding-protein-dependent transport system permease family. MalFG subfamily. In terms of assembly, the complex is composed of two ATP-binding proteins (MsmX), two transmembrane proteins (AraP and AraQ) and a solute-binding protein (AraN).

It is found in the cell membrane. Its function is as follows. Part of the ABC transporter complex AraNPQ involved in the uptake of arabinooligosaccharides. Transports alpha-1,5-arabinooligosaccharides, at least up to four L-arabinosyl units. Responsible for the translocation of the substrate across the membrane. The protein is Arabinooligosaccharides transport system permease protein AraQ of Bacillus subtilis (strain 168).